Reading from the N-terminus, the 87-residue chain is Small ribosomal subunit protein uS15 (87 aa).

This sequence belongs to the universal ribosomal protein uS15 family. As to quaternary structure, part of the 30S ribosomal subunit. Forms a bridge to the 50S subunit in the 70S ribosome, contacting the 23S rRNA.

Its function is as follows. One of the primary rRNA binding proteins, it binds directly to 16S rRNA where it helps nucleate assembly of the platform of the 30S subunit by binding and bridging several RNA helices of the 16S rRNA. Forms an intersubunit bridge (bridge B4) with the 23S rRNA of the 50S subunit in the ribosome. The chain is Small ribosomal subunit protein uS15 from Pseudothermotoga lettingae (strain ATCC BAA-301 / DSM 14385 / NBRC 107922 / TMO) (Thermotoga lettingae).